A 636-amino-acid chain; its full sequence is MVQASSHAEGGHEGKQGAARSLGLLVAAVGVVYGDIGTSPLYTLKEVFTGGYGVPVNHDGVLGILSLILWSLLWVVSFKYVMFILRADNQGEGGTMALTALARRATAAYPRLRTLMVICGLIGASLFYGDSMITPAVSVLSAVEGMGLAFDGIDHWVVPISLVVLVALFLVQKHGTETIGKLFGPIMVTWFVVLGALGVHGISQSPEVLKAFNPGWAVNFFVVHPGMGVAILGAVVLALTGAEALYADMGHFGRKPIARAWFILVLPALVLNYFGQGALLLQNPEAARNPFYLLAPSWALLPLVGLATMATVIASQAVISGAFSLTRQAIQLGYIPRMQIQHTSSDEQGQIYIGAVNWTLMVGVVLLVIGFESSGALAAAYGVAVTGTMLMTTILVSAVMLLLWKWPPVLAVPLLMGFLFVDGLFFAANVPKIVQGGAFPVLAGGVLFLLMSTWKRGKQILVERIDEGALPLPLFISSIRIQPPHRVEGTAVFLTARSDAVPHALLHNMLHNQVLHSQVVLLTVVSEDQPRVPEHERFEVEAYGDGFFRVLLHFGFMDEPDVPAALKLCHLDDLDFTPMRTTYFLSRETVIASRLEGMSRWRGNLFAFLLKNANGNLRFFNLPLNRVIELGTQVEI.

Transmembrane regions (helical) follow at residues 22-42 (LGLL…SPLY), 64-84 (ILSL…VMFI), 115-135 (LMVI…MITP), 150-170 (FDGI…ALFL), 182-202 (LFGP…VHGI), 220-240 (FFVV…LALT), 261-281 (WFIL…ALLL), 293-313 (LLAP…ATVI), 351-371 (IYIG…VIGF), 383-403 (VAVT…MLLL), 408-428 (PVLA…FFAA), and 433-453 (IVQG…LMST).

This sequence belongs to the HAK/KUP transporter (TC 2.A.72) family.

It is found in the cell inner membrane. The enzyme catalyses K(+)(in) + H(+)(in) = K(+)(out) + H(+)(out). Transport of potassium into the cell. Likely operates as a K(+):H(+) symporter. This is Probable potassium transport system protein Kup from Pseudomonas putida (strain GB-1).